Reading from the N-terminus, the 430-residue chain is Adenylosuccinate synthetase (430 aa).

GTP contacts are provided by residues 12–18 and 40–42; these read GDEGKGK and GHT. Asp13 serves as the catalytic Proton acceptor. Mg(2+)-binding residues include Asp13 and Gly40. Residues 13 to 16, 38 to 41, Thr130, Arg144, Gln224, and Thr239 contribute to the IMP site; these read DEGK and NAGH. The active-site Proton donor is the His41. Residues 277 to 298 form a disordered region; it reads PFPTEQDNETGRKIGERGREFG. Residues 285–296 are compositionally biased toward basic and acidic residues; that stretch reads ETGRKIGERGRE. 299-305 contacts substrate; sequence TNTGRPR. Arg303 is a binding site for IMP. GTP-binding positions include Arg305, 331 to 333, and 413 to 415; these read KLD and STS.

The protein belongs to the adenylosuccinate synthetase family. As to quaternary structure, homodimer. Requires Mg(2+) as cofactor.

It localises to the cytoplasm. The catalysed reaction is IMP + L-aspartate + GTP = N(6)-(1,2-dicarboxyethyl)-AMP + GDP + phosphate + 2 H(+). It participates in purine metabolism; AMP biosynthesis via de novo pathway; AMP from IMP: step 1/2. Plays an important role in the de novo pathway of purine nucleotide biosynthesis. Catalyzes the first committed step in the biosynthesis of AMP from IMP. In Bradyrhizobium sp. (strain BTAi1 / ATCC BAA-1182), this protein is Adenylosuccinate synthetase.